A 458-amino-acid chain; its full sequence is tRNA modification GTPase MnmE (458 aa).

3 residues coordinate (6S)-5-formyl-5,6,7,8-tetrahydrofolate: R26, E88, and R127. The TrmE-type G domain occupies 224-378 (GLSTAIIGRP…IEDRINQLFF (155 aa)). N234 is a binding site for K(+). Residues 234 to 239 (NVGKSS), 253 to 259 (TDIAGTT), and 278 to 281 (DTAG) contribute to the GTP site. S238 provides a ligand contact to Mg(2+). K(+)-binding residues include T253, I255, and T258. A Mg(2+)-binding site is contributed by T259. K458 lines the (6S)-5-formyl-5,6,7,8-tetrahydrofolate pocket.

The protein belongs to the TRAFAC class TrmE-Era-EngA-EngB-Septin-like GTPase superfamily. TrmE GTPase family. Homodimer. Heterotetramer of two MnmE and two MnmG subunits. The cofactor is K(+).

It is found in the cytoplasm. Exhibits a very high intrinsic GTPase hydrolysis rate. Involved in the addition of a carboxymethylaminomethyl (cmnm) group at the wobble position (U34) of certain tRNAs, forming tRNA-cmnm(5)s(2)U34. The sequence is that of tRNA modification GTPase MnmE from Streptococcus pyogenes serotype M4 (strain MGAS10750).